Here is a 420-residue protein sequence, read N- to C-terminus: Threonine aspartase 1 (420 aa).

The segment at Met1 to Val25 is disordered. The active-site Nucleophile is Thr234.

This sequence belongs to the Ntn-hydrolase family. As to quaternary structure, intramolecular proteolysis generates 2 subunits, alpha and beta, which reassemble through a non-covalent association to form the fully active enzyme.

Its function is as follows. Protease responsible for KMT2A/MLL1 and KMT2D/MLL2 processing and activation. Through substrate activation, it controls the expression of HOXA genes, and the expression of key cell cycle regulators including CCNA1, CCNB1, CCNE1 and CDKN2A. This chain is Threonine aspartase 1 (Tasp1), found in Mus musculus (Mouse).